A 139-amino-acid chain; its full sequence is Nucleoside diphosphate kinase (139 aa).

Lys-10, Phe-58, Arg-86, Thr-92, Arg-103, and Asn-113 together coordinate ATP. The Pros-phosphohistidine intermediate role is filled by His-116.

The protein belongs to the NDK family. Homotetramer. The cofactor is Mg(2+).

The protein localises to the cytoplasm. The catalysed reaction is a 2'-deoxyribonucleoside 5'-diphosphate + ATP = a 2'-deoxyribonucleoside 5'-triphosphate + ADP. It catalyses the reaction a ribonucleoside 5'-diphosphate + ATP = a ribonucleoside 5'-triphosphate + ADP. Its function is as follows. Major role in the synthesis of nucleoside triphosphates other than ATP. The ATP gamma phosphate is transferred to the NDP beta phosphate via a ping-pong mechanism, using a phosphorylated active-site intermediate. This is Nucleoside diphosphate kinase from Desulfovibrio desulfuricans (strain ATCC 27774 / DSM 6949 / MB).